A 38-amino-acid polypeptide reads, in one-letter code: Large ribosomal subunit protein bL12 (38 aa).

It belongs to the bacterial ribosomal protein bL12 family. As to quaternary structure, homodimer. Part of the ribosomal stalk of the 50S ribosomal subunit. Forms a multimeric L10(L12)X complex, where L10 forms an elongated spine to which 2 to 4 L12 dimers bind in a sequential fashion. Binds GTP-bound translation factors.

Forms part of the ribosomal stalk which helps the ribosome interact with GTP-bound translation factors. Is thus essential for accurate translation. This chain is Large ribosomal subunit protein bL12 (rplL), found in Salinivibrio costicola (Vibrio costicola).